We begin with the raw amino-acid sequence, 102 residues long: MSDQEAKPSSEDLGDKKDGGDYIKLKVIGQDSSEIHFKVKMTTHLKKLKESYRQRQGVPMNSLRFLFEGQRISDHQTPKELGMEEEDVIEVYQEQTGGHSTF.

Residues 1 to 20 are disordered; the sequence is MSDQEAKPSSEDLGDKKDGG. Residues 21 to 98 enclose the Ubiquitin-like domain; that stretch reads DYIKLKVIGQ…IEVYQEQTGG (78 aa). Residue Gly-98 forms a Glycyl lysine isopeptide (Gly-Lys) (interchain with K-? in acceptor proteins) linkage. A propeptide spanning residues 99–102 is cleaved from the precursor; sequence HSTF.

It belongs to the ubiquitin family. SUMO subfamily. Interacts with sae2, ube2i, ranbp2, pias1 and pias2. Covalently attached to a number of proteins including rangap1 and ranbp2. Interacts with sox9 and sox10. Cleavage of precursor form by a sentrin-specific protease is necessary for function.

It localises to the nucleus membrane. Its subcellular location is the nucleus speckle. The protein resides in the cytoplasm. The protein localises to the nucleus. It is found in the PML body. It localises to the cell membrane. In terms of biological role, ubiquitin-like protein that can be covalently attached to proteins as a monomer or a lysine-linked polymer. Covalent attachment via an isopeptide bond to its substrates requires prior activation by the E1 complex sae1-sae2 and linkage to the E2 enzyme ube2i. This post-translational modification on lysine residues of proteins plays a crucial role in a number of cellular processes such as nuclear transport, DNA replication and repair, mitosis and signal transduction. Polymeric sumo1 chains are also susceptible to polyubiquitination which functions as a signal for proteasomal degradation of modified proteins. The sequence is that of Small ubiquitin-related modifier 1-A (sumo1-a) from Xenopus laevis (African clawed frog).